The following is a 213-amino-acid chain: Thiamine-phosphate synthase (213 aa).

4-amino-2-methyl-5-(diphosphooxymethyl)pyrimidine-binding positions include 40–44 and Asn-75; that span reads QFREK. Mg(2+) contacts are provided by Asp-76 and Asp-95. Ser-113 contributes to the 4-amino-2-methyl-5-(diphosphooxymethyl)pyrimidine binding site. 139-141 is a binding site for 2-[(2R,5Z)-2-carboxy-4-methylthiazol-5(2H)-ylidene]ethyl phosphate; it reads TPS. Lys-142 serves as a coordination point for 4-amino-2-methyl-5-(diphosphooxymethyl)pyrimidine. Residues Gly-171 and 191–192 contribute to the 2-[(2R,5Z)-2-carboxy-4-methylthiazol-5(2H)-ylidene]ethyl phosphate site; that span reads IS.

Belongs to the thiamine-phosphate synthase family. Requires Mg(2+) as cofactor.

The catalysed reaction is 2-[(2R,5Z)-2-carboxy-4-methylthiazol-5(2H)-ylidene]ethyl phosphate + 4-amino-2-methyl-5-(diphosphooxymethyl)pyrimidine + 2 H(+) = thiamine phosphate + CO2 + diphosphate. It catalyses the reaction 2-(2-carboxy-4-methylthiazol-5-yl)ethyl phosphate + 4-amino-2-methyl-5-(diphosphooxymethyl)pyrimidine + 2 H(+) = thiamine phosphate + CO2 + diphosphate. The enzyme catalyses 4-methyl-5-(2-phosphooxyethyl)-thiazole + 4-amino-2-methyl-5-(diphosphooxymethyl)pyrimidine + H(+) = thiamine phosphate + diphosphate. It participates in cofactor biosynthesis; thiamine diphosphate biosynthesis; thiamine phosphate from 4-amino-2-methyl-5-diphosphomethylpyrimidine and 4-methyl-5-(2-phosphoethyl)-thiazole: step 1/1. Condenses 4-methyl-5-(beta-hydroxyethyl)thiazole monophosphate (THZ-P) and 2-methyl-4-amino-5-hydroxymethyl pyrimidine pyrophosphate (HMP-PP) to form thiamine monophosphate (TMP). The chain is Thiamine-phosphate synthase from Staphylococcus aureus (strain MRSA252).